Consider the following 446-residue polypeptide: Methylenetetrahydrofolate--tRNA-(uracil-5-)-methyltransferase TrmFO (446 aa).

Position 8–13 (8–13 (GAGLAG)) interacts with FAD.

It belongs to the MnmG family. TrmFO subfamily. Requires FAD as cofactor.

It localises to the cytoplasm. The enzyme catalyses uridine(54) in tRNA + (6R)-5,10-methylene-5,6,7,8-tetrahydrofolate + NADH + H(+) = 5-methyluridine(54) in tRNA + (6S)-5,6,7,8-tetrahydrofolate + NAD(+). It carries out the reaction uridine(54) in tRNA + (6R)-5,10-methylene-5,6,7,8-tetrahydrofolate + NADPH + H(+) = 5-methyluridine(54) in tRNA + (6S)-5,6,7,8-tetrahydrofolate + NADP(+). Its function is as follows. Catalyzes the folate-dependent formation of 5-methyl-uridine at position 54 (M-5-U54) in all tRNAs. The polypeptide is Methylenetetrahydrofolate--tRNA-(uracil-5-)-methyltransferase TrmFO (Paracoccus denitrificans (strain Pd 1222)).